A 102-amino-acid polypeptide reads, in one-letter code: NADH-quinone oxidoreductase subunit K (102 aa).

3 consecutive transmembrane segments (helical) span residues 6–26 (MEHGLALAAALFCIGLVGLMV), 30–50 (ILFILMSLEVMMNAAALAFVV), and 62–82 (VMFIMVITLAAAEASIGLAIL).

The protein belongs to the complex I subunit 4L family. NDH-1 is composed of 13 different subunits. Subunits NuoA, H, J, K, L, M, N constitute the membrane sector of the complex.

The protein localises to the cell inner membrane. It carries out the reaction a quinone + NADH + 5 H(+)(in) = a quinol + NAD(+) + 4 H(+)(out). In terms of biological role, NDH-1 shuttles electrons from NADH, via FMN and iron-sulfur (Fe-S) centers, to quinones in the respiratory chain. The immediate electron acceptor for the enzyme in this species is believed to be ubiquinone. Couples the redox reaction to proton translocation (for every two electrons transferred, four hydrogen ions are translocated across the cytoplasmic membrane), and thus conserves the redox energy in a proton gradient. This is NADH-quinone oxidoreductase subunit K from Ectopseudomonas mendocina (strain ymp) (Pseudomonas mendocina).